Here is a 294-residue protein sequence, read N- to C-terminus: Foldase protein PrsA 1 (294 aa).

The signal sequence occupies residues 1 to 21 (MTKLKKVMISLVAATLLLLAG). Residue Cys22 is the site of N-palmitoyl cysteine attachment. Cys22 carries S-diacylglycerol cysteine lipidation. In terms of domain architecture, PpiC spans 135–226 (EPNITVRHIL…YGYHLIQLVK (92 aa)).

It belongs to the PrsA family.

Its subcellular location is the cell membrane. It carries out the reaction [protein]-peptidylproline (omega=180) = [protein]-peptidylproline (omega=0). Its function is as follows. Plays a major role in protein secretion by helping the post-translocational extracellular folding of several secreted proteins. The polypeptide is Foldase protein PrsA 1 (prsA1) (Listeria innocua serovar 6a (strain ATCC BAA-680 / CLIP 11262)).